Consider the following 1280-residue polypeptide: Clustered mitochondria protein homolog (1280 aa).

The segment covering Met1 to Ser27 has biased composition (polar residues). Disordered stretches follow at residues Met1–Pro49 and Gly169–Tyr189. A compositionally biased stretch (acidic residues) spans Val32–Gly43. In terms of domain architecture, Clu spans Asp338–Ile582. 3 disordered regions span residues Lys633–Gln669, Gly905–Leu943, and Thr1214–Pro1280. Over residues Asn635–Gln648 the composition is skewed to basic residues. Residues Lys649 to Gln669 show a composition bias toward basic and acidic residues. Residues Pro1221–Ala1235 show a composition bias toward low complexity. The span at Val1245 to Ser1261 shows a compositional bias: basic and acidic residues. The segment covering Pro1265–Pro1280 has biased composition (basic residues).

This sequence belongs to the CLU family. In terms of assembly, may associate with the eukaryotic translation initiation factor 3 (eIF-3) complex.

Its subcellular location is the cytoplasm. MRNA-binding protein involved in proper cytoplasmic distribution of mitochondria. The polypeptide is Clustered mitochondria protein homolog (Phaeosphaeria nodorum (strain SN15 / ATCC MYA-4574 / FGSC 10173) (Glume blotch fungus)).